Consider the following 369-residue polypeptide: uncharacterized protein (369 aa).

This sequence to A.pernix APE1276 and APE1804.

This is an uncharacterized protein from Saccharolobus solfataricus (strain ATCC 35092 / DSM 1617 / JCM 11322 / P2) (Sulfolobus solfataricus).